Here is a 490-residue protein sequence, read N- to C-terminus: ATP synthase subunit beta (490 aa).

173 to 180 (GGAGVGKT) is an ATP binding site.

It belongs to the ATPase alpha/beta chains family. As to quaternary structure, F-type ATPases have 2 components, CF(1) - the catalytic core - and CF(0) - the membrane proton channel. CF(1) has five subunits: alpha(3), beta(3), gamma(1), delta(1), epsilon(1). CF(0) has three main subunits: a(1), b(2) and c(9-12). The alpha and beta chains form an alternating ring which encloses part of the gamma chain. CF(1) is attached to CF(0) by a central stalk formed by the gamma and epsilon chains, while a peripheral stalk is formed by the delta and b chains.

It localises to the cell membrane. It carries out the reaction ATP + H2O + 4 H(+)(in) = ADP + phosphate + 5 H(+)(out). Functionally, produces ATP from ADP in the presence of a proton gradient across the membrane. The catalytic sites are hosted primarily by the beta subunits. The chain is ATP synthase subunit beta from Bifidobacterium longum (strain DJO10A).